The primary structure comprises 254 residues: Triosephosphate isomerase (254 aa).

12-14 (NWK) contacts substrate. The active-site Electrophile is His99. The active-site Proton acceptor is Glu169. Residues Gly175, Ser214, and 235–236 (GG) each bind substrate.

It belongs to the triosephosphate isomerase family. In terms of assembly, homodimer.

It is found in the cytoplasm. The enzyme catalyses D-glyceraldehyde 3-phosphate = dihydroxyacetone phosphate. It functions in the pathway carbohydrate biosynthesis; gluconeogenesis. The protein operates within carbohydrate degradation; glycolysis; D-glyceraldehyde 3-phosphate from glycerone phosphate: step 1/1. Functionally, involved in the gluconeogenesis. Catalyzes stereospecifically the conversion of dihydroxyacetone phosphate (DHAP) to D-glyceraldehyde-3-phosphate (G3P). This is Triosephosphate isomerase from Xanthobacter autotrophicus (strain ATCC BAA-1158 / Py2).